Consider the following 516-residue polypeptide: Apolipoprotein N-acyltransferase (516 aa).

6 helical membrane-spanning segments follow: residues 24-44 (LAQA…LLYL), 58-78 (GWCY…ISIH), 90-110 (LLTL…AWLW), 125-145 (LAFA…LTGF), 163-183 (APLG…ALLV), and 192-212 (PPAL…GLAL). In terms of domain architecture, CN hydrolase spans 230–471 (VQGNVEQNLK…RAVLYGEVTP (242 aa)). Catalysis depends on Glu270, which acts as the Proton acceptor. Lys331 is a catalytic residue. Cys383 serves as the catalytic Nucleophile. A helical membrane pass occupies residues 479-499 (LRWRAWPLAGLAVLLLGWALL).

Belongs to the CN hydrolase family. Apolipoprotein N-acyltransferase subfamily.

The protein localises to the cell inner membrane. The catalysed reaction is N-terminal S-1,2-diacyl-sn-glyceryl-L-cysteinyl-[lipoprotein] + a glycerophospholipid = N-acyl-S-1,2-diacyl-sn-glyceryl-L-cysteinyl-[lipoprotein] + a 2-acyl-sn-glycero-3-phospholipid + H(+). The protein operates within protein modification; lipoprotein biosynthesis (N-acyl transfer). Functionally, catalyzes the phospholipid dependent N-acylation of the N-terminal cysteine of apolipoprotein, the last step in lipoprotein maturation. The polypeptide is Apolipoprotein N-acyltransferase (Azotobacter vinelandii (strain DJ / ATCC BAA-1303)).